The sequence spans 1004 residues: Importin subunit beta-5 (1004 aa).

Met1 carries the N-acetylmethionine modification. One can recognise an Importin N-terminal domain in the interval 21–100 (AETQLLQWCD…REVLLKLCLN (80 aa)).

The protein belongs to the importin beta family. In terms of assembly, interacts with NAP1.

It is found in the cytoplasm. It localises to the nucleus. The protein resides in the nuclear pore complex. Functionally, required for nuclear protein import and mediates docking of import substrate to distinct nucleoporins. Serves a receptor for nuclear localization signals. Mediates the nuclear import of TATA-binding protein (TBP) and of histones H2A and H2B. This chain is Importin subunit beta-5 (KAP114), found in Saccharomyces cerevisiae (strain ATCC 204508 / S288c) (Baker's yeast).